A 492-amino-acid polypeptide reads, in one-letter code: Beclin 1-associated autophagy-related key regulator (492 aa).

At serine 29 the chain carries Phosphoserine. Residues 70 to 180 (RDRERFIDKK…KLGDLVEKKT (111 aa)) are a coiled coil. Disordered stretches follow at residues 213–232 (TSGR…MTSS) and 411–473 (GVAG…AGGM). Positions 222–232 (SSETDSAMTSS) are enriched in polar residues. A Phosphoserine modification is found at serine 416. Residues 424 to 433 (VSDEETDLGT) show a composition bias toward acidic residues. Threonine 429 carries the phosphothreonine modification. The segment covering 447-473 (PSQPVEVSQSQSTQASPPIASSSAGGM) has biased composition (low complexity).

This sequence belongs to the ATG14 family. Forms homooligomers; homo-oligomerization is essential for the roles in membrane tethering and enhancement of SNARE-mediated fusion. Component of the PI3K (PI3KC3/PI3K-III/class III phosphatidylinositol 3-kinase) complex I (PI3KC3-C1) in which the core composed of the catalytic subunit PIK3C3, the regulatory subunit PIK3R4 and BECN1 is associated with ATG14. PI3KC3-C1 displays a V-shaped architecture with PIK3R4 serving as a bridge between PIK3C3 and the ATG14:BECN1 subcomplex. PI3KC3-C1 can associate with further regulatory subunits. Interacts with PIK3CB. Interacts (via coiled-coil domain) with BECN2 (via coiled-coil domain); this interaction is tighter than BECN2 self-association. Interacts with the STX17-SNAP29 binary t-SNARE complex. Interacts with NRBF2. Interacts with PIK3C3 and BECN1; this interaction is increased in the absence of TMEM39A. Interacts with STEEP1; the interaction is required for trafficking of STING1 from the endoplasmic reticulum. Interacts with ARMC3 (via ARM domains). Ubiquitinated via 'Lys-6', 'Lys-11' and 'Lys-63'-linked polyubiquitin chains on multiple lysines by MARCHF7, leading to ATG14 aggregation and loss of interaction with STX17.

It is found in the cytoplasm. The protein localises to the endoplasmic reticulum membrane. Its subcellular location is the preautophagosomal structure membrane. Required for both basal and inducible autophagy. Determines the localization of the autophagy-specific PI3-kinase complex. Plays a role in autophagosome formation and MAP1LC3/LC3 conjugation to phosphatidylethanolamine. Promotes BECN1 translocation from the trans-Golgi network to autophagosomes. Enhances PIK3C3 activity in a BECN1-dependent manner. Essential for the autophagy-dependent phosphorylation of BECN1. Stimulates the phosphorylation of BECN1, but suppresses the phosphorylation PIK3C3 by AMPK. Binds to STX17-SNAP29 binary t-SNARE complex on autophagosomes and primes it for VAMP8 interaction to promote autophagosome-endolysosome fusion. Modulates the hepatic lipid metabolism. This Rattus norvegicus (Rat) protein is Beclin 1-associated autophagy-related key regulator.